The sequence spans 689 residues: Glycine--tRNA ligase beta subunit (689 aa).

It belongs to the class-II aminoacyl-tRNA synthetase family. In terms of assembly, tetramer of two alpha and two beta subunits.

Its subcellular location is the cytoplasm. The enzyme catalyses tRNA(Gly) + glycine + ATP = glycyl-tRNA(Gly) + AMP + diphosphate. This chain is Glycine--tRNA ligase beta subunit, found in Escherichia coli O17:K52:H18 (strain UMN026 / ExPEC).